Reading from the N-terminus, the 1167-residue chain is Rhoptry neck protein 2-like protein 2 (1167 aa).

The N-terminal stretch at 1 to 20 (MSSNLAFLSLSLAESTASLG) is a signal peptide. Topologically, residues 21-977 (KSLEETRTRL…WVAKRSRSRK (957 aa)) are cytoplasmic. The tract at residues 55–94 (GPGLSVEGKQTEQMSRKSAEDTRASSLSSDPDDGRAAQLA) is disordered. Basic and acidic residues predominate over residues 68 to 77 (MSRKSAEDTR). A helical transmembrane segment spans residues 978-998 (LAIVSVLSLGLIFAYTLLSAL). Residues 999–1167 (DIAQFLTDSG…TPQRAQDGSR (169 aa)) are Extracellular-facing. A disulfide bridge links cysteine 1015 with cysteine 1026.

Belongs to the apicomplexan parasites RON2 family.

Its subcellular location is the secreted. It localises to the host cell membrane. May play a role in host cell invasion. The chain is Rhoptry neck protein 2-like protein 2 (RON2L2) from Toxoplasma gondii (strain ATCC 50611 / Me49).